A 165-amino-acid chain; its full sequence is Putative BTB/POZ domain-containing protein At2g40440 (165 aa).

The BTB domain maps to 24 to 98 (VDVRLKAGDS…IYSDGSMLSA (75 aa)).

It participates in protein modification; protein ubiquitination. May act as a substrate-specific adapter of an E3 ubiquitin-protein ligase complex (CUL3-RBX1-BTB) which mediates the ubiquitination and subsequent proteasomal degradation of target proteins. The protein is Putative BTB/POZ domain-containing protein At2g40440 of Arabidopsis thaliana (Mouse-ear cress).